The following is a 245-amino-acid chain: Probable phosphatase Spro_1934 (245 aa).

Zn(2+)-binding residues include His7, His9, His15, His40, Glu73, His101, His131, Asp192, and His194.

Belongs to the PHP family. Homotrimer. It depends on Zn(2+) as a cofactor.

The sequence is that of Probable phosphatase Spro_1934 from Serratia proteamaculans (strain 568).